The following is a 117-amino-acid chain: uncharacterized protein (117 aa).

This is an uncharacterized protein from Acidianus two-tailed virus (ATV).